The sequence spans 218 residues: Adenylate kinase (218 aa).

10–15 (GAGKGT) serves as a coordination point for ATP. The NMP stretch occupies residues 30–59 (STGDMIRETIKSGSALGQELKKVLDAGELV). AMP contacts are provided by residues Thr31, Arg36, 57–59 (ELV), and Gln92. An LID region spans residues 122–159 (GRRIHPASGRTYHTKFNPPKVADKDDVTGEPLITRTDD). ATP is bound by residues Arg123 and 132-133 (TY). The AMP site is built by Arg156 and Arg167. Gln202 contacts ATP.

Belongs to the adenylate kinase family. As to quaternary structure, monomer.

It is found in the cytoplasm. The catalysed reaction is AMP + ATP = 2 ADP. It participates in purine metabolism; AMP biosynthesis via salvage pathway; AMP from ADP: step 1/1. In terms of biological role, catalyzes the reversible transfer of the terminal phosphate group between ATP and AMP. Plays an important role in cellular energy homeostasis and in adenine nucleotide metabolism. The protein is Adenylate kinase of Francisella tularensis subsp. tularensis (strain FSC 198).